The sequence spans 323 residues: Beta-ketoacyl-[acyl-carrier-protein] synthase III (323 aa).

Catalysis depends on residues Cys114 and His250. Positions 251 to 255 (QANIR) are ACP-binding. The active site involves Asn280.

It belongs to the thiolase-like superfamily. FabH family. As to quaternary structure, homodimer.

It localises to the cytoplasm. It catalyses the reaction malonyl-[ACP] + acetyl-CoA + H(+) = 3-oxobutanoyl-[ACP] + CO2 + CoA. It participates in lipid metabolism; fatty acid biosynthesis. Its function is as follows. Catalyzes the condensation reaction of fatty acid synthesis by the addition to an acyl acceptor of two carbons from malonyl-ACP. Catalyzes the first condensation reaction which initiates fatty acid synthesis and may therefore play a role in governing the total rate of fatty acid production. Possesses both acetoacetyl-ACP synthase and acetyl transacylase activities. Its substrate specificity determines the biosynthesis of branched-chain and/or straight-chain of fatty acids. The chain is Beta-ketoacyl-[acyl-carrier-protein] synthase III from Alkalilimnicola ehrlichii (strain ATCC BAA-1101 / DSM 17681 / MLHE-1).